The chain runs to 162 residues: Auracyanin-A (162 aa).

The first 22 residues, 1–22 (MKITLRMMVLAVLTAMAMVLAA), serve as a signal peptide directing secretion. Cys23 is lipidated: N-palmitoyl cysteine. A lipid anchor (S-diacylglycerol cysteine) is attached at Cys23. The region spanning 42 to 162 (VTIEIGSKGE…PLMQGKLVVN (121 aa)) is the Plastocyanin-like domain. His81, Cys146, His151, and Met155 together coordinate Cu cation.

As to quaternary structure, monomer. The cofactor is Cu cation.

The protein resides in the cell membrane. Probably a soluble electron acceptor for the integral membrane protein electron transfer alternative complex III (ACIII). This Chloroflexus aurantiacus (strain ATCC 29366 / DSM 635 / J-10-fl) protein is Auracyanin-A.